The sequence spans 184 residues: MINDLKKDSEQRMLKTLESLEQGFAKVRTGRAHPSILNGVMVPYYGSDVPLNQVANVGVEDSRTLIVQPFERTMVAAIDKAIRESDLGLNPITADSIRVPLPALTEETRRDMQKIARSEAENAKVAIRNIRRDVLGDIKALLKEKEISEDDERRAGDDIQKITDKYVAEVDKRLAAKEAELMRV.

This sequence belongs to the RRF family.

It localises to the cytoplasm. Functionally, responsible for the release of ribosomes from messenger RNA at the termination of protein biosynthesis. May increase the efficiency of translation by recycling ribosomes from one round of translation to another. This is Ribosome-recycling factor from Acinetobacter baumannii (strain SDF).